Here is a 221-residue protein sequence, read N- to C-terminus: Sugar transporter SWEET1 (221 aa).

7 helical membrane passes run 3 to 23 (AGGV…LGMF), 44 to 63 (FLPF…YGVL), 68 to 88 (TLII…LAYL), 102 to 122 (ATLL…VPDL), 129 to 149 (LGLF…ADLA), 160 to 180 (LSFS…IYGF), and 186 to 206 (YITV…VLFY). Residues 10–94 (FLSSACVLFT…LAYLHYSPQK (85 aa)) form the MtN3/slv 1 domain. Residues 127–212 (QQLGLFCSVF…VLFYKYPPEQ (86 aa)) form the MtN3/slv 2 domain. The mediates interaction with TRPV2 stretch occupies residues 149-221 (AKIIQTKSTQ…QDTKYRLLQT (73 aa)).

The protein belongs to the SWEET sugar transporter family. In terms of assembly, interacts with TRPV2; the interaction probably occurs intracellularly and depends on TRPV2 N-glycosylation.

It is found in the golgi apparatus membrane. It localises to the cell membrane. Its function is as follows. Mediates sugar transport across membranes. May stimulate V(D)J recombination by the activation of RAG1. The sequence is that of Sugar transporter SWEET1 (Slc50a1) from Rattus norvegicus (Rat).